The chain runs to 335 residues: Mycobacterial beta-ketoacyl-[acyl-carrier-protein] synthase III (335 aa).

Catalysis depends on residues Cys-122 and His-258. The segment at 259-263 is ACP-binding; sequence QANSR. The active site involves Asn-289.

The protein belongs to the thiolase-like superfamily. FabH family. In terms of assembly, homodimer.

Its subcellular location is the cytoplasm. It catalyses the reaction malonyl-[ACP] + dodecanoyl-CoA + H(+) = 3-oxotetradecanoyl-[ACP] + CO2 + CoA. It participates in lipid metabolism; fatty acid biosynthesis. The protein operates within lipid metabolism; mycolic acid biosynthesis. In terms of biological role, catalyzes the condensation reaction of fatty acid synthesis by the addition to an acyl acceptor of two carbons from malonyl-ACP. Catalyzes the first condensation reaction which initiates fatty acid synthesis and may therefore play a role in governing the total rate of fatty acid production. Possesses both acetoacetyl-ACP synthase and acetyl transacylase activities. Its substrate specificity determines the biosynthesis of branched-chain and/or straight-chain of fatty acids. This Mycobacterium ulcerans (strain Agy99) protein is Mycobacterial beta-ketoacyl-[acyl-carrier-protein] synthase III.